Reading from the N-terminus, the 441-residue chain is Coiled-coil domain-containing protein 91 (441 aa).

A GGA1-binding motif region spans residues 1–16 (MDDDDFGGFEAAETFD). The interval 1-26 (MDDDDFGGFEAAETFDGGSGETQTTS) is disordered. Ser-43 and Ser-46 each carry phosphoserine. Coiled-coil stretches lie at residues 130-209 (SNIQ…GHEA) and 249-407 (ELLN…KRLD). The homodimerization stretch occupies residues 210-413 (LSIIVDEYKA…KRLDQVIRQR (204 aa)).

Homodimer. Interacts with GGA1, GGA2 and AP1G1. In terms of tissue distribution, widely expressed.

It is found in the membrane. The protein localises to the golgi apparatus. The protein resides in the trans-Golgi network membrane. It localises to the trans-Golgi network. Functionally, involved in the regulation of membrane traffic through the trans-Golgi network (TGN). Functions in close cooperation with the GGAs in the sorting of hydrolases to lysosomes. The sequence is that of Coiled-coil domain-containing protein 91 (CCDC91) from Homo sapiens (Human).